The following is a 349-amino-acid chain: CCN family member 2 (349 aa).

Positions 1 to 26 are cleaved as a signal peptide; the sequence is MTAASMGPVRVAFVVLLALCSRPAVG. Positions 27–98 constitute an IGFBP N-terminal domain; sequence QNCSGPCRCP…NRKIGVCTAK (72 aa). A glycan (N-linked (GlcNAc...) asparagine) is linked at N28. 6 cysteine pairs are disulfide-bonded: C29–C54, C33–C56, C35–C57, C43–C60, C68–C82, and C74–C95. The VWFC domain maps to 101-167; that stretch reads APCIFGGTVY…GKCCEEWVCD (67 aa). Residues 198–243 enclose the TSP type-1 domain; that stretch reads NCLVQTTEWSACSKTCGMGISTRVTNDNASCRLEKQSRLCMVRPCE. Residue N225 is glycosylated (N-linked (GlcNAc...) asparagine). The segment at 247–349 is heparin-binding; sequence EENIKKGKKC…YYRKMYGDMA (103 aa). Disulfide bonds link C256-C293, C273-C307, C284-C323, C287-C325, and C292-C329. In terms of domain architecture, CTCK spans 256 to 330; it reads CIRTPKISKP…KTCACHYNCP (75 aa).

It belongs to the CCN family. As to quaternary structure, monomer. Interacts with TSKU. As to expression, expressed in bone marrow and thymic cells. Also expressed one of two Wilms tumors tested.

It localises to the secreted. The protein localises to the extracellular space. The protein resides in the extracellular matrix. Functionally, major connective tissue mitoattractant secreted by vascular endothelial cells. Promotes proliferation and differentiation of chondrocytes. Is involved in the stimulation of osteoblast differentiation and has a critical role in osteogenesis. Mediates heparin- and divalent cation-dependent cell adhesion in many cell types including fibroblasts, myofibroblasts, endothelial and epithelial cells. Enhances fibroblast growth factor-induced DNA synthesis. This chain is CCN family member 2, found in Homo sapiens (Human).